Here is a 444-residue protein sequence, read N- to C-terminus: Xaa-Pro dipeptidase (444 aa).

Residues D247, D258, H340, E385, and E424 each contribute to the Mn(2+) site.

This sequence belongs to the peptidase M24B family. Bacterial-type prolidase subfamily. Mn(2+) serves as cofactor.

It catalyses the reaction Xaa-L-Pro dipeptide + H2O = an L-alpha-amino acid + L-proline. Splits dipeptides with a prolyl residue in the C-terminal position. In Photorhabdus laumondii subsp. laumondii (strain DSM 15139 / CIP 105565 / TT01) (Photorhabdus luminescens subsp. laumondii), this protein is Xaa-Pro dipeptidase.